The following is a 64-amino-acid chain: Large ribosomal subunit protein uL29 (64 aa).

It belongs to the universal ribosomal protein uL29 family.

The sequence is that of Large ribosomal subunit protein uL29 from Maridesulfovibrio salexigens (strain ATCC 14822 / DSM 2638 / NCIMB 8403 / VKM B-1763) (Desulfovibrio salexigens).